Reading from the N-terminus, the 433-residue chain is 23S rRNA (uracil(1939)-C(5))-methyltransferase RlmD (433 aa).

The region spanning 10–68 (RTTTRQIITVSVNDLDSFGQGVARHNGKTLFIPGLLPQENAEVAVTEDKKQYARAKVVR) is the TRAM domain. [4Fe-4S] cluster-binding residues include Cys-81, Cys-87, Cys-90, and Cys-162. S-adenosyl-L-methionine-binding residues include Gln-265, Phe-294, Asn-299, Glu-315, Asn-342, and Asp-363. Cys-389 serves as the catalytic Nucleophile.

It belongs to the class I-like SAM-binding methyltransferase superfamily. RNA M5U methyltransferase family. RlmD subfamily.

The catalysed reaction is uridine(1939) in 23S rRNA + S-adenosyl-L-methionine = 5-methyluridine(1939) in 23S rRNA + S-adenosyl-L-homocysteine + H(+). In terms of biological role, catalyzes the formation of 5-methyl-uridine at position 1939 (m5U1939) in 23S rRNA. The chain is 23S rRNA (uracil(1939)-C(5))-methyltransferase RlmD from Shigella flexneri serotype 5b (strain 8401).